Here is a 314-residue protein sequence, read N- to C-terminus: Hydrolase 4 (314 aa).

The Involved in the stabilization of the negatively charged intermediate by the formation of the oxyanion hole motif lies at 73 to 75; sequence HGA. Active-site residues include Ser165 and Asp260.

The protein belongs to the 'GDXG' lipolytic enzyme family.

It functions in the pathway alkaloid biosynthesis. Component of the seco-iridoid and derivatives monoterpenoid indole alkaloids (MIAs, e.g. vincadifformine) biosynthesis pathway. Catalyzes the conversion of O-acetylstemmadenine (OAS) to vincadifformine. May also trigger the formation of additional unknown MIAs. This chain is Hydrolase 4, found in Catharanthus roseus (Madagascar periwinkle).